We begin with the raw amino-acid sequence, 408 residues long: Probable ethanolamine permease EutH (408 aa).

Transmembrane regions (helical) follow at residues 1 to 21, 61 to 81, 89 to 109, 126 to 146, 155 to 175, 192 to 212, 230 to 250, 274 to 294, 313 to 333, 342 to 362, and 369 to 389; these read MGIN…AAVD, AMVG…PVII, ANPS…FFLA, ILGS…LGII, ALGV…GGLI, FALI…VALG, FLVA…LLGW, IEVI…VLLL, NIAA…FGMM, VINC…LGFA, and MIFP…GVAM.

Belongs to the EutH family.

The protein resides in the cell inner membrane. It carries out the reaction ethanolamine(in) = ethanolamine(out). It functions in the pathway amine and polyamine degradation; ethanolamine degradation. In terms of biological role, probably involved in the diffusion of protonated ethanolamine (EA) into the cell at low pH. At low pH most EA is protonated, and this permease becomes necessary. Contributes to bacterial survival and replication in acidified macrophage vacuoles, but not to bacterial uptake by macrophages. Its function is as follows. Expression of the eut operon allows this bacteria to use ethanolamine (EA) as a carbon, nitrogen and energy source. It relies on cobalamin (vitamin B12) both as a cofactor for the ethanolamine ammonia-lyase (EAL) activity and to induce the operon. EA enhances bacterial survival in macrophages in a concentration-dependent manner, suggesting it is an important nutrient during infection. The sequence is that of Probable ethanolamine permease EutH from Salmonella typhimurium (strain LT2 / SGSC1412 / ATCC 700720).